The chain runs to 337 residues: MVREKVKVSTRTLQWRCVESRRDSKRLYYGRFILSPLMKGQADTIGIAMRRALLGEIEGTCITRAKSENIPHDYSNIVGIQESVHEILMNLNEIVLRSNLYGARNAIICVQGPGYITARDIILPPSVEIIDNTQHIATLTESIDLCIGLKIERNRGYSLKILNTFEDRSYPIDAVFMPVQNANHSIHSYGNGNGKQEILFLEIWTNGSLTPKEALHEASRNLINLFIPFLHVEEETFYLENNQHHVTLPLFPFHNRLVNLRKKKKELAFQYIFIDQLELPPRIYNCLKKSNIHTLLDLLNNSQEDLIKIEHFHIEDVKKILDILEKKIEKAFQKKID.

An alpha N-terminal domain (alpha-NTD) region spans residues methionine 1–glutamate 233. The tract at residues leucine 267–aspartate 337 is alpha C-terminal domain (alpha-CTD).

It belongs to the RNA polymerase alpha chain family. In plastids the minimal PEP RNA polymerase catalytic core is composed of four subunits: alpha, beta, beta', and beta''. When a (nuclear-encoded) sigma factor is associated with the core the holoenzyme is formed, which can initiate transcription.

It is found in the plastid. The protein resides in the chloroplast. It catalyses the reaction RNA(n) + a ribonucleoside 5'-triphosphate = RNA(n+1) + diphosphate. Functionally, DNA-dependent RNA polymerase catalyzes the transcription of DNA into RNA using the four ribonucleoside triphosphates as substrates. This chain is DNA-directed RNA polymerase subunit alpha, found in Arabis hirsuta (Hairy rock-cress).